The sequence spans 655 residues: Probable inactive receptor kinase At1g48480 (655 aa).

The first 32 residues, 1–32, serve as a signal peptide directing secretion; it reads MRVFFFPNSSMAILSVFLSLLLLSLPLPSTQD. 6 LRR repeats span residues 71–95, 98–120, 122–144, 146–169, 170–192, and 194–215; these read SNRV…IFGN, QLRT…LSTS, NLRH…LFSL, HLVR…TNLT, KLKT…DLPL, and QFNV…RFES. The segment at 234–260 is disordered; that stretch reads EETVPSQPTSGGNRTPPSVEGSEEKKK. Positions 237–249 are enriched in polar residues; sequence VPSQPTSGGNRTP. A helical transmembrane segment spans residues 269–289; that stretch reads IAGIVIGCVVGFALIVLILMV. A Protein kinase domain is found at 371–646; the sequence is RASAEVLGKG…RKMENLRPYS (276 aa). At serine 373 the chain carries Phosphoserine. 377 to 385 is a binding site for ATP; the sequence is LGKGTFGTA. A Phosphothreonine modification is found at threonine 394. ATP is bound at residue lysine 399. The residue at position 450 (serine 450) is a Phosphoserine. Position 526 is a phosphothreonine (threonine 526). Serine 546 carries the post-translational modification Phosphoserine. Threonine 622 is modified (phosphothreonine).

It belongs to the protein kinase superfamily. As to expression, highly expressed in seedlings and leaves. Lower expression in roots, stems, flowers and siliques. Detected in the vascular tissues of roots, in the trichomes of young rosettes leaves and hydathodes, in the floral abscission zones, in filament apex and stomata cells of anthers, in inflorescence stems and in sepals.

The protein localises to the cell membrane. This is Probable inactive receptor kinase At1g48480 (RKL1) from Arabidopsis thaliana (Mouse-ear cress).